A 212-amino-acid chain; its full sequence is Thymidylate kinase (212 aa).

10–17 (GLEGAGKT) contributes to the ATP binding site.

It belongs to the thymidylate kinase family.

It catalyses the reaction dTMP + ATP = dTDP + ADP. In terms of biological role, phosphorylation of dTMP to form dTDP in both de novo and salvage pathways of dTTP synthesis. This is Thymidylate kinase from Yersinia pestis bv. Antiqua (strain Antiqua).